A 524-amino-acid polypeptide reads, in one-letter code: Protein tweety homolog 3 (524 aa).

Topologically, residues 1 to 42 (MAGVSYAAPWWVSLLHRLPHFDLRWEATSSQFRPEDADYQQA) are extracellular. The chain crosses the membrane as a helical span at residues 43-63 (LLLLGATALACLALDLLFLLF). Topologically, residues 64 to 86 (YSFWLCCRRRKTDEHLDADCCCT) are cytoplasmic. Residues 87–107 (AWCVIITTLVCSAGIAVGFYG) form a helical membrane-spanning segment. At 108-211 (NGETSDGIHR…VDLYDWYRWL (104 aa)) the chain is on the extracellular side. Ca(2+) contacts are provided by Glu110 and Asp113. Residues Asn126 and Asn144 are each glycosylated (N-linked (GlcNAc...) asparagine). Residues 212 to 232 (GYLGLLLLDVIICLLVLVGLI) form a helical membrane-spanning segment. Over 233-236 (RSSK) the chain is Cytoplasmic. Residues 237–257 (GILVGVCLLGVLALVISWGAL) traverse the membrane as a helical segment. Over 258–386 (GLELAVSVGS…LTGFCYDGVE (129 aa)) the chain is Extracellular. 2 cysteine pairs are disulfide-bonded: Cys271–Cys381 and Cys299–Cys366. A glycan (N-linked (GlcNAc...) asparagine) is linked at Asn351. Residues 387-407 (GLIYLALFSFVTALMFSSIVC) traverse the membrane as a helical segment. Residues 408-524 (SIPHTWQQKR…PRPDSSGSGH (117 aa)) lie on the Cytoplasmic side of the membrane. Disordered regions lie at residues 413–435 (WQQK…RQAH) and 485–524 (RCEN…GSGH). Ser496 is modified (phosphoserine). Positions 498 to 501 (PPSY) match the PY-motif; mediates interaction with NEDD4L motif. Positions 501 to 524 (YTSSMRAKYLATSQPRPDSSGSGH) are enriched in polar residues. Phosphoserine is present on residues Ser504 and Ser522.

It belongs to the tweety family. As to quaternary structure, homotetramer; disulfide-linked. Forms cis-homodimers in the presence of Ca(2+). Interacts with NEDD4L. In terms of processing, ubiquitinated by NEDD4L. N-glycosylated. In terms of tissue distribution, expressed in excitable tissues. Expressed in the brain, heart, skeletal muscle, colon, spleen, kidney and peripheral blood leukocytes. Also expressed in fat, the pancreas, thymus, and uterus.

It is found in the cell membrane. The enzyme catalyses chloride(in) = chloride(out). The catalysed reaction is L-glutamate(out) = L-glutamate(in). Inhibited by (4-[(2-butyl-6,7-dichloro-2- cyclopentyl-2,3-dihydro-1-oxo-1H-inden-5-yl)oxy]butanoic acid), genistein and PD98059 (MEK1 inhibitor). Calcium-independent, swelling-dependent volume-regulated anion channel (VRAC-swell) which plays a pivotal role in the process of regulatory volume decrease (RVD) in the brain through the efflux of anions like chloride and organic osmolytes like glutamate. Probable large-conductance Ca(2+)-activated chloride channel. The sequence is that of Protein tweety homolog 3 (Ttyh3) from Mus musculus (Mouse).